Reading from the N-terminus, the 212-residue chain is ATP-dependent dethiobiotin synthetase BioD (212 aa).

An ATP-binding site is contributed by 13–18; the sequence is GIGKTV. Threonine 17 is a Mg(2+) binding site. Residue lysine 33 is part of the active site. Residue serine 37 coordinates substrate. Glutamate 100 provides a ligand contact to Mg(2+). ATP is bound by residues 100–103, 160–161, and 184–186; these read EGAG, IS, and PLL.

It belongs to the dethiobiotin synthetase family. As to quaternary structure, homodimer. Requires Mg(2+) as cofactor.

The protein localises to the cytoplasm. The enzyme catalyses (7R,8S)-7,8-diammoniononanoate + CO2 + ATP = (4R,5S)-dethiobiotin + ADP + phosphate + 3 H(+). It functions in the pathway cofactor biosynthesis; biotin biosynthesis; biotin from 7,8-diaminononanoate: step 1/2. Its function is as follows. Catalyzes a mechanistically unusual reaction, the ATP-dependent insertion of CO2 between the N7 and N8 nitrogen atoms of 7,8-diaminopelargonic acid (DAPA, also called 7,8-diammoniononanoate) to form a ureido ring. This Brucella abortus (strain S19) protein is ATP-dependent dethiobiotin synthetase BioD.